Reading from the N-terminus, the 183-residue chain is Thymidine kinase (183 aa).

11–18 (GPMFSGKT) lines the ATP pocket. Glu89 acts as the Proton acceptor in catalysis. Phe119 is a binding site for substrate. Zn(2+)-binding residues include Cys144 and Cys147. 163 to 167 (VMDIG) is a binding site for substrate. Positions 176 and 179 each coordinate Zn(2+).

It belongs to the thymidine kinase family.

It catalyses the reaction thymidine + ATP = dTMP + ADP + H(+). In Vertebrata (FPV), this protein is Thymidine kinase (TK).